The sequence spans 197 residues: A-type ATP synthase subunit E 2 (197 aa).

Belongs to the V-ATPase E subunit family. Has multiple subunits with at least A(3), B(3), C, D, E, F, H, I and proteolipid K(x).

Its subcellular location is the cell membrane. Functionally, component of the A-type ATP synthase that produces ATP from ADP in the presence of a proton gradient across the membrane. This is A-type ATP synthase subunit E 2 from Methanospirillum hungatei JF-1 (strain ATCC 27890 / DSM 864 / NBRC 100397 / JF-1).